The primary structure comprises 239 residues: Lactate utilization protein A 1 (239 aa).

It belongs to the LutA/YkgE family.

Its function is as follows. Is involved in L-lactate degradation and allows cells to grow with lactate as the sole carbon source. This chain is Lactate utilization protein A 1, found in Bacillus cereus (strain AH820).